The following is a 178-amino-acid chain: Cytidylate kinase (178 aa).

7–15 provides a ligand contact to ATP; the sequence is GLPGTGTTT.

The protein belongs to the cytidylate kinase family. Type 2 subfamily.

The protein resides in the cytoplasm. It catalyses the reaction CMP + ATP = CDP + ADP. The enzyme catalyses dCMP + ATP = dCDP + ADP. The polypeptide is Cytidylate kinase (Methanococcus maripaludis (strain C7 / ATCC BAA-1331)).